We begin with the raw amino-acid sequence, 1203 residues long: Cation-transporting ATPase catp-5 (1203 aa).

Topologically, residues 1-68 (MNTSEREPLL…YAYKETIGRQ (68 aa)) are cytoplasmic. The segment at 21–42 (TTDNPSTKIMKREKDNPKAKTT) is disordered. The helical transmembrane segment at 69–89 (ILFWLLTIVTLGFYQLLAYWV) threads the bilayer. At 90-209 (KSLFVKVRFQ…RKIYNMNALA (120 aa)) the chain is on the extracellular side. The helical transmembrane segment at 210–230 (LALTPILVILFKEVLGPFYLF) threads the bilayer. The Cytoplasmic portion of the chain corresponds to 231–242 (QCFSVALWYSDN). Residues 243–263 (YAYYASVIVIITVGSAAVAVY) form a helical membrane-spanning segment. The Extracellular segment spans residues 264 to 297 (QMRAQEKRIRNMVGDTISVIVRRDGHDITIDASE). Residues 298–318 (IVPMDILILPSNTFILPCDCL) traverse the membrane as a helical segment. The Cytoplasmic portion of the chain corresponds to 319 to 414 (LMNGTVIVNE…KPQEKEALKD (96 aa)). The chain crosses the membrane as a helical span at residues 415-435 (VMVFILVLGFIALIGFIYTVI). The Extracellular portion of the chain corresponds to 436–451 (EMVSRGESLKHIIIRS). Residues 452 to 472 (LDIITIVVPPALPAAMSVGII) traverse the membrane as a helical segment. At 473 to 935 (NANSRLKKKK…KEGRCALVTS (463 aa)) the chain is on the cytoplasmic side. Residue aspartate 503 is the 4-aspartylphosphate intermediate of the active site. The segment at 595–617 (ETQDFDTVQPTVLRPPPEQATYH) is disordered. Mg(2+) contacts are provided by aspartate 883 and aspartate 887. A helical membrane pass occupies residues 936–956 (YAVSKYMAAYSLNEFLSVMLL). The Extracellular segment spans residues 957–962 (YNDGTN). A helical transmembrane segment spans residues 963-983 (ISDGQFLYIDLVLITLVALFL). The Cytoplasmic portion of the chain corresponds to 984-1007 (GNTEASRKLSGIPPPRRLATSAFY). A helical membrane pass occupies residues 1008 to 1028 (FSVFGQMFFNIITQTTGYLLV). Residues 1029-1046 (RGQSWYVPNPEELDNTTT) are Extracellular-facing. A helical membrane pass occupies residues 1047-1067 (MIGTTVFFTSCCMYLGYAFVY). Topologically, residues 1068 to 1085 (SKGHPYRRSVFTNWLLCG) are cytoplasmic. The chain crosses the membrane as a helical span at residues 1086-1106 (IIFVIGAINMVMIFTNMGFLM). The Extracellular segment spans residues 1107–1120 (NLMGFVYVPSTSMR). The chain crosses the membrane as a helical span at residues 1121–1141 (FILLAISLAGVFLSLLYEHFF). At 1142–1203 (VEKVVAIHFE…DRKETIESKC (62 aa)) the chain is on the cytoplasmic side.

Belongs to the cation transport ATPase (P-type) (TC 3.A.3) family. Type V subfamily. In terms of tissue distribution, expressed in the 20 intestinal cells and in the excretory cell.

The protein resides in the apical cell membrane. The enzyme catalyses ATP + H2O = ADP + phosphate + H(+). Involved in the uptake and/or transport of polyamines, probably through ATP hydrolysis. This contributes to the maintenance of intracellular polyamine levels. Polyamines are essential for cell proliferation and are implicated in cellular processes, ranging from DNA replication to apoptosis. This chain is Cation-transporting ATPase catp-5, found in Caenorhabditis elegans.